The sequence spans 609 residues: N-acetyltransferase ESCO2 (609 aa).

Disordered stretches follow at residues 1–71 (MLSR…RVSP), 100–165 (EAKS…TDQV), 197–241 (KKPT…SPVR), and 314–357 (PDHD…LTAT). Polar residues-rich tracts occupy residues 13 to 22 (AESNPSKKQI) and 41 to 54 (ISLN…STPK). Positions 126 to 135 (PAKKVQKKPR) are enriched in basic residues. Over residues 214 to 230 (PTYEKPSIRKPVREKEL) the composition is skewed to basic and acidic residues. Positions 345–355 (PLNSSTPSALT) are enriched in polar residues. The segment at 392–416 (TTCASCGMLYSTDSPEDNFQHTQFH) adopts a CCHH-type zinc-finger fold.

The protein belongs to the acetyltransferase family. ECO subfamily.

The protein resides in the nucleus. The protein localises to the chromosome. It catalyses the reaction L-lysyl-[protein] + acetyl-CoA = N(6)-acetyl-L-lysyl-[protein] + CoA + H(+). Functionally, acetyltransferase required for the establishment of sister chromatid cohesion. Couples the processes of cohesion and DNA replication to ensure that only sister chromatids become paired together. Essential for early development. The chain is N-acetyltransferase ESCO2 (esco2) from Danio rerio (Zebrafish).